The primary structure comprises 415 residues: Serine--tRNA ligase (415 aa).

Thr231–Glu233 is an L-serine binding site. Arg262–Glu264 lines the ATP pocket. Glu285 serves as a coordination point for L-serine. Position 349–352 (Glu349–Ser352) interacts with ATP. Ser383 contributes to the L-serine binding site.

Belongs to the class-II aminoacyl-tRNA synthetase family. Type-1 seryl-tRNA synthetase subfamily. In terms of assembly, homodimer. The tRNA molecule binds across the dimer.

Its subcellular location is the cytoplasm. It carries out the reaction tRNA(Ser) + L-serine + ATP = L-seryl-tRNA(Ser) + AMP + diphosphate + H(+). It catalyses the reaction tRNA(Sec) + L-serine + ATP = L-seryl-tRNA(Sec) + AMP + diphosphate + H(+). It functions in the pathway aminoacyl-tRNA biosynthesis; selenocysteinyl-tRNA(Sec) biosynthesis; L-seryl-tRNA(Sec) from L-serine and tRNA(Sec): step 1/1. Its function is as follows. Catalyzes the attachment of serine to tRNA(Ser). Is also able to aminoacylate tRNA(Sec) with serine, to form the misacylated tRNA L-seryl-tRNA(Sec), which will be further converted into selenocysteinyl-tRNA(Sec). The chain is Serine--tRNA ligase from Helicobacter pylori (strain Shi470).